A 281-amino-acid polypeptide reads, in one-letter code: Pantothenate synthetase (281 aa).

Residue 30–37 participates in ATP binding; it reads MGYLHEGH. The active-site Proton donor is His37. Gln61 lines the (R)-pantoate pocket. Gln61 is a binding site for beta-alanine. Residue 147–150 coordinates ATP; that stretch reads GQKD. Gln153 is a binding site for (R)-pantoate. ATP contacts are provided by residues Val176 and 184–187; that span reads MSSR.

Belongs to the pantothenate synthetase family. Homodimer.

It is found in the cytoplasm. It carries out the reaction (R)-pantoate + beta-alanine + ATP = (R)-pantothenate + AMP + diphosphate + H(+). Its pathway is cofactor biosynthesis; (R)-pantothenate biosynthesis; (R)-pantothenate from (R)-pantoate and beta-alanine: step 1/1. Its function is as follows. Catalyzes the condensation of pantoate with beta-alanine in an ATP-dependent reaction via a pantoyl-adenylate intermediate. The sequence is that of Pantothenate synthetase from Heliobacterium modesticaldum (strain ATCC 51547 / Ice1).